Here is a 188-residue protein sequence, read N- to C-terminus: Pyridoxal 5'-phosphate synthase subunit PdxT (188 aa).

46–48 is a binding site for L-glutamine; the sequence is GES. Cys78 functions as the Nucleophile in the catalytic mechanism. L-glutamine contacts are provided by residues Arg105 and 134–135; that span reads IR. Residues His170 and Glu172 each act as charge relay system in the active site.

The protein belongs to the glutaminase PdxT/SNO family. In the presence of PdxS, forms a dodecamer of heterodimers. Only shows activity in the heterodimer.

It catalyses the reaction aldehydo-D-ribose 5-phosphate + D-glyceraldehyde 3-phosphate + L-glutamine = pyridoxal 5'-phosphate + L-glutamate + phosphate + 3 H2O + H(+). It carries out the reaction L-glutamine + H2O = L-glutamate + NH4(+). It participates in cofactor biosynthesis; pyridoxal 5'-phosphate biosynthesis. Functionally, catalyzes the hydrolysis of glutamine to glutamate and ammonia as part of the biosynthesis of pyridoxal 5'-phosphate. The resulting ammonia molecule is channeled to the active site of PdxS. The polypeptide is Pyridoxal 5'-phosphate synthase subunit PdxT (Thermotoga neapolitana (strain ATCC 49049 / DSM 4359 / NBRC 107923 / NS-E)).